Here is a 160-residue protein sequence, read N- to C-terminus: uncharacterized protein (160 aa).

One can recognise an N-acetyltransferase domain in the interval 2–140 (MIIIPNNEIA…KARRLKPEIP (139 aa)).

This is an uncharacterized protein from Bacillus subtilis (strain 168).